Consider the following 42-residue polypeptide: Photosystem I reaction center subunit IX (42 aa).

A helical transmembrane segment spans residues 7-27 (YLSTAPVLATLWFGFLAGLLI).

Belongs to the PsaJ family.

Its subcellular location is the plastid. It localises to the chloroplast thylakoid membrane. Functionally, may help in the organization of the PsaE and PsaF subunits. This is Photosystem I reaction center subunit IX from Psilotum nudum (Whisk fern).